The following is a 234-amino-acid chain: Sugar fermentation stimulation protein homolog (234 aa).

The protein belongs to the SfsA family.

The sequence is that of Sugar fermentation stimulation protein homolog from Shewanella sp. (strain ANA-3).